Reading from the N-terminus, the 354-residue chain is MTLQTDDFAPAPARRVVSAAPASPQEQAIERALRPKLLQEYVGQVKAREQLEIFIGAARQRGEALDHVLLFGPPGLGKTTLSHIIAAELGVNLRQTSGPVLEKPKDLAALLTNLENRDVLFIDEIHRLSPVVEEILYPALEDYQIDIMIGEGPAARSIKLDLQPFTLVGATTRAGMLTNPLRDRFGIVARLEFYSAQELARIVKRSAGLLGVPMDDAGGLEIARRSRGTPRIANRLLRRVRDYTQVKADGHITKDIAERALAMLDVDPEGLDVMDRKLLEAVIHRFDGGPVGLDNIAASIGEETGTIEDVIEPYLIQQGFLQRTPRGRIATQAAFRHLGIAAAPGAQAPGLFAV.

The tract at residues 1-22 (MTLQTDDFAPAPARRVVSAAPA) is disordered. The large ATPase domain (RuvB-L) stretch occupies residues 5–194 (TDDFAPAPAR…FGIVARLEFY (190 aa)). Over residues 9–22 (APAPARRVVSAAPA) the composition is skewed to low complexity. Residues Leu-33, Arg-34, Gly-75, Lys-78, Thr-79, Thr-80, 141–143 (EDY), Arg-184, Tyr-194, and Arg-231 contribute to the ATP site. Thr-79 serves as a coordination point for Mg(2+). Residues 195–265 (SAQELARIVK…IAERALAMLD (71 aa)) form a small ATPAse domain (RuvB-S) region. Residues 268–354 (PEGLDVMDRK…GAQAPGLFAV (87 aa)) are head domain (RuvB-H). DNA is bound by residues Arg-323 and Arg-328.

It belongs to the RuvB family. As to quaternary structure, homohexamer. Forms an RuvA(8)-RuvB(12)-Holliday junction (HJ) complex. HJ DNA is sandwiched between 2 RuvA tetramers; dsDNA enters through RuvA and exits via RuvB. An RuvB hexamer assembles on each DNA strand where it exits the tetramer. Each RuvB hexamer is contacted by two RuvA subunits (via domain III) on 2 adjacent RuvB subunits; this complex drives branch migration. In the full resolvosome a probable DNA-RuvA(4)-RuvB(12)-RuvC(2) complex forms which resolves the HJ.

It localises to the cytoplasm. The catalysed reaction is ATP + H2O = ADP + phosphate + H(+). In terms of biological role, the RuvA-RuvB-RuvC complex processes Holliday junction (HJ) DNA during genetic recombination and DNA repair, while the RuvA-RuvB complex plays an important role in the rescue of blocked DNA replication forks via replication fork reversal (RFR). RuvA specifically binds to HJ cruciform DNA, conferring on it an open structure. The RuvB hexamer acts as an ATP-dependent pump, pulling dsDNA into and through the RuvAB complex. RuvB forms 2 homohexamers on either side of HJ DNA bound by 1 or 2 RuvA tetramers; 4 subunits per hexamer contact DNA at a time. Coordinated motions by a converter formed by DNA-disengaged RuvB subunits stimulates ATP hydrolysis and nucleotide exchange. Immobilization of the converter enables RuvB to convert the ATP-contained energy into a lever motion, pulling 2 nucleotides of DNA out of the RuvA tetramer per ATP hydrolyzed, thus driving DNA branch migration. The RuvB motors rotate together with the DNA substrate, which together with the progressing nucleotide cycle form the mechanistic basis for DNA recombination by continuous HJ branch migration. Branch migration allows RuvC to scan DNA until it finds its consensus sequence, where it cleaves and resolves cruciform DNA. This chain is Holliday junction branch migration complex subunit RuvB, found in Verminephrobacter eiseniae (strain EF01-2).